The primary structure comprises 437 residues: uncharacterized protein (437 aa).

Composition is skewed to basic residues over residues 1–29, 81–91, and 101–118; these read MDTP…RHRN, LRGRHPRVRRV, and RRRH…GRNR. 2 disordered regions span residues 1–31 and 77–437; these read MDTP…RNDH and EHVP…QGTR. A compositionally biased stretch (basic and acidic residues) spans 119-132; sequence HAGDRRAPGVDSRL. Basic residues predominate over residues 133–142; sequence RQQHQHPRGR. The span at 143–164 shows a compositional bias: basic and acidic residues; the sequence is HASDRVQDGAHPRRQRLREQPR. Over residues 165–190 the composition is skewed to basic residues; it reads HAGRPRRRQPPRRGRSRGTHRRHLRQ. Composition is skewed to basic and acidic residues over residues 198–209 and 217–253; these read GPDEDQAREFRG and HPPT…EAGR. 2 stretches are compositionally biased toward basic residues: residues 284–293 and 324–348; these read TVHRGGRLRG and PHSR…RVRH. A compositionally biased stretch (low complexity) spans 371–382; sequence DAAAYASVPAHA.

This is an uncharacterized protein from Haloferax lucentense (strain DSM 14919 / JCM 9276 / NCIMB 13854 / Aa 2.2) (Haloferax alicantei).